Consider the following 240-residue polypeptide: MMDLFETNSYFFYLDGDNGAFQQLGVADGSPVYPGSEGTLSPCRDQLPVDAGSDRSEEEHVLAPPGLQPHCPGQCLIWACKTCKRKSAPTDRRKAATLRERRRLKKINEAFEALKRRTVANPNQRLPKVEILRSAINYIERLQDLLHSLDQQDKPQKADEEPFSYNSKEAPVQSEDFLSTCHPEWHHIPDHSRMPNLNIKEEGSLQENSSSSLQCLSSIVDSISSDEPRHPCTIQELVEN.

One can recognise a bHLH domain in the interval 91-142 (DRRKAATLRERRRLKKINEAFEALKRRTVANPNQRLPKVEILRSAINYIERL).

Efficient DNA binding requires dimerization with another bHLH protein. As to expression, skeletal muscle.

It localises to the nucleus. Involved in muscle differentiation (myogenic factor). Induces fibroblasts to differentiate into myoblasts. Probable sequence specific DNA-binding protein. The chain is Myogenic factor 6 (myf6) from Xenopus laevis (African clawed frog).